The primary structure comprises 602 residues: UvrABC system protein C (602 aa).

The 78-residue stretch at 17 to 94 (KTSGCYKMYS…IKKYKPTYNI (78 aa)) folds into the GIY-YIG domain. Positions 199-234 (SKLLNDIEIKMKEVIMKENFEAAIKLKETKKSLIEI) constitute a UVR domain.

Belongs to the UvrC family. In terms of assembly, interacts with UvrB in an incision complex.

The protein resides in the cytoplasm. Its function is as follows. The UvrABC repair system catalyzes the recognition and processing of DNA lesions. UvrC both incises the 5' and 3' sides of the lesion. The N-terminal half is responsible for the 3' incision and the C-terminal half is responsible for the 5' incision. This Borrelia recurrentis (strain A1) protein is UvrABC system protein C.